The following is a 211-amino-acid chain: Envelope protein UL45 homolog (211 aa).

The Intravirion segment spans residues 1-46; the sequence is MMSPTPEDDRDLVVVRGRLRMMDNGAEHDRERRSYTAWPHLCCGCT. The helical; Signal-anchor for type II membrane protein transmembrane segment at 47-67 threads the bilayer; it reads IGIILTMFVIATTLLLASLFA. The Virion surface portion of the chain corresponds to 68–211; the sequence is FSYMSLESGT…SSILSNAIMK (144 aa). Asn96 and Asn133 each carry an N-linked (GlcNAc...) asparagine; by host glycan.

Belongs to the herpesviridae HHV-1 UL45 family.

It is found in the virion membrane. The chain is Envelope protein UL45 homolog (UL45H) from Gallid herpesvirus 2 (strain Chicken/Md5/ATCC VR-987) (GaHV-2).